Reading from the N-terminus, the 186-residue chain is Ribosome-recycling factor (186 aa).

This sequence belongs to the RRF family.

The protein resides in the cytoplasm. Its function is as follows. Responsible for the release of ribosomes from messenger RNA at the termination of protein biosynthesis. May increase the efficiency of translation by recycling ribosomes from one round of translation to another. The protein is Ribosome-recycling factor of Rickettsia akari (strain Hartford).